The chain runs to 229 residues: Ribonuclease 3 (229 aa).

The 129-residue stretch at 2–130 (FEKLQDVLCY…ILGAIFLDGG (129 aa)) folds into the RNase III domain. Glu43 is a binding site for Mg(2+). Residue Asp47 is part of the active site. Residues Asp116 and Glu119 each coordinate Mg(2+). The active site involves Glu119. The DRBM domain occupies 157–226 (DAKSTLQELT…AGLALELLEG (70 aa)).

This sequence belongs to the ribonuclease III family. Homodimer. It depends on Mg(2+) as a cofactor.

The protein resides in the cytoplasm. The catalysed reaction is Endonucleolytic cleavage to 5'-phosphomonoester.. Functionally, digests double-stranded RNA. Involved in the processing of primary rRNA transcript to yield the immediate precursors to the large and small rRNAs (23S and 16S). Processes some mRNAs, and tRNAs when they are encoded in the rRNA operon. Processes pre-crRNA and tracrRNA of type II CRISPR loci if present in the organism. This Oleidesulfovibrio alaskensis (strain ATCC BAA-1058 / DSM 17464 / G20) (Desulfovibrio alaskensis) protein is Ribonuclease 3.